A 137-amino-acid polypeptide reads, in one-letter code: Beta-synuclein (137 aa).

Tandem repeats lie at residues 20 to 30 (EKTKQGVTEAA) and 31 to 41 (EKTKEGVLYVG). The 4 X 11 AA tandem repeats of [EGS]-K-T-K-[EQ]-[GQ]-V-X(4) stretch occupies residues 20-67 (EKTKQGVTEAAEKTKEGVLYVGSKTKEGVVQGVASVAEKTKEQASHLG). The 3; approximate repeat unit spans residues 42–56 (SKTKEGVVQGVASVA). Residues 57–67 (EKTKEQASHLG) form repeat 4. The segment covering 88–97 (EFPTDLKPEE) has biased composition (basic and acidic residues). The interval 88-137 (EFPTDLKPEEVAQEAAEEPLIEPLMEPEGESYEDSPQEEYQEYEPEAKGP) is disordered. The span at 98-131 (VAQEAAEEPLIEPLMEPEGESYEDSPQEEYQEYE) shows a compositional bias: acidic residues. Ser118 is subject to Phosphoserine; by BARK1, CK2 and GRK5.

This sequence belongs to the synuclein family. Phosphorylated. Phosphorylation by G-protein coupled receptor kinases (GRK) is more efficient than phosphorylation by CK1, CK2 and CaM-kinase II. Expressed specifically in brain.

The protein resides in the cytoplasm. In terms of biological role, may be involved in neuronal plasticity. This Rattus norvegicus (Rat) protein is Beta-synuclein (Sncb).